We begin with the raw amino-acid sequence, 145 residues long: Bacilliredoxin SAR1592 (145 aa).

It belongs to the bacilliredoxin family.

The protein is Bacilliredoxin SAR1592 of Staphylococcus aureus (strain MRSA252).